A 2464-amino-acid chain; its full sequence is Nonribosomal peptide synthetase NPS2 (2464 aa).

The adenylation 1 stretch occupies residues 275–670 (DDHHPGTSQP…GRIDTQIKLR (396 aa)). The Carrier 1 domain occupies 814–888 (TKAEGQLLEI…QIAKALDASS (75 aa)). Position 848 is an O-(pantetheine 4'-phosphoryl)serine (Ser848). The segment at 924 to 1325 (IYPPFPLQEG…EGLALDLAQG (402 aa)) is condensation 1. The region spanning 1364–1437 (EDLLLRLRKI…RMAASAGKKI (74 aa)) is the Carrier 2 domain. Ser1398 carries the O-(pantetheine 4'-phosphoryl)serine modification. The tract at residues 1479–1887 (DVFPVTTLQA…LRVLVDDLDA (409 aa)) is condensation 2. A Carrier 3 domain is found at 1917-1993 (SSWDEKSSTL…DLVMRAGAED (77 aa)). At Ser1954 the chain carries O-(pantetheine 4'-phosphoryl)serine. The condensation 3 stretch occupies residues 2047–2340 (GGSRYQHVFG…ATQIQDDLRE (294 aa)).

Belongs to the NRP synthetase family.

It functions in the pathway siderophore biosynthesis. Its function is as follows. Nonribosomal peptide synthetase; part of the siderophore basidioferrin biosynthetic pathway. The biosynthesis of basidioferrin depends on the hydroxylation of ornithine to N(5)-hydroxyornithine, catalyzed by the monooxygenase SMO1. The second step, the acylation of N(5)-hydroxy-L-ornithine is catalyzed by a not yet identified N-acyltransferase. Finally, assembly of basidioferrin is catalyzed by the nonribosomal peptide synthase (NRPS) NPS2 via amide bond formation between three L-AHO molecules to release the linear L-AHO trimer. N-5-acetyl-N-5-hydroxy-L-ornithine (L-AHO) and N-5-cis-anhydromevalonyl-N-5-hydroxy-L-ornithine (L-AMHO) are accepted as the substrates by the NPS2 adenylation (A) domain, but only L-AHO is trimerized. This Ceriporiopsis subvermispora (strain B) (White-rot fungus) protein is Nonribosomal peptide synthetase NPS2.